We begin with the raw amino-acid sequence, 338 residues long: Lipoyl synthase (338 aa).

The disordered stretch occupies residues 1–24 (MTTVQEAVPNLIPTQDATPRPAPK). [4Fe-4S] cluster contacts are provided by C84, C89, C95, C110, C114, C117, and S324. In terms of domain architecture, Radical SAM core spans 96–313 (FSGGTATFMI…AEEGYKMGFK (218 aa)).

It belongs to the radical SAM superfamily. Lipoyl synthase family. Requires [4Fe-4S] cluster as cofactor.

Its subcellular location is the cytoplasm. It catalyses the reaction [[Fe-S] cluster scaffold protein carrying a second [4Fe-4S](2+) cluster] + N(6)-octanoyl-L-lysyl-[protein] + 2 oxidized [2Fe-2S]-[ferredoxin] + 2 S-adenosyl-L-methionine + 4 H(+) = [[Fe-S] cluster scaffold protein] + N(6)-[(R)-dihydrolipoyl]-L-lysyl-[protein] + 4 Fe(3+) + 2 hydrogen sulfide + 2 5'-deoxyadenosine + 2 L-methionine + 2 reduced [2Fe-2S]-[ferredoxin]. It participates in protein modification; protein lipoylation via endogenous pathway; protein N(6)-(lipoyl)lysine from octanoyl-[acyl-carrier-protein]: step 2/2. Functionally, catalyzes the radical-mediated insertion of two sulfur atoms into the C-6 and C-8 positions of the octanoyl moiety bound to the lipoyl domains of lipoate-dependent enzymes, thereby converting the octanoylated domains into lipoylated derivatives. This chain is Lipoyl synthase, found in Pseudomonas putida (strain W619).